The following is a 344-amino-acid chain: S-adenosylmethionine:tRNA ribosyltransferase-isomerase (344 aa).

It belongs to the QueA family. As to quaternary structure, monomer.

Its subcellular location is the cytoplasm. It catalyses the reaction 7-aminomethyl-7-carbaguanosine(34) in tRNA + S-adenosyl-L-methionine = epoxyqueuosine(34) in tRNA + adenine + L-methionine + 2 H(+). It participates in tRNA modification; tRNA-queuosine biosynthesis. Transfers and isomerizes the ribose moiety from AdoMet to the 7-aminomethyl group of 7-deazaguanine (preQ1-tRNA) to give epoxyqueuosine (oQ-tRNA). This Pediococcus pentosaceus (strain ATCC 25745 / CCUG 21536 / LMG 10740 / 183-1w) protein is S-adenosylmethionine:tRNA ribosyltransferase-isomerase.